Here is a 992-residue protein sequence, read N- to C-terminus: P3N-PIPO polyprotein (992 aa).

A Peptidase S30 domain is found at 168-308 (TSQCRKPTYV…VENMEDIQHY (141 aa)). Residues His221, Glu230, and Ser262 each act as for P1 proteinase activity in the active site. The Involved in interaction with stylet and aphid transmission signature appears at 361–364 (KLSC). Residues 617–619 (PTK) carry the Involved in virions binding and aphid transmission motif. Positions 643–765 (MYIAKEGFCY…QSEMKFYRVG (123 aa)) constitute a Peptidase C6 domain. Catalysis depends on for helper component proteinase activity residues Cys651 and His724.

This sequence belongs to the potyviridae P3N-PIPO polyprotein family. As to quaternary structure, interacts (via PIPO domain) with host PCaP1 protein; this interaction may help to anchor the movement complex to the plasma membrane from which the complex could move to the plasmodesmata. In terms of processing, potyviral RNA is expressed as two polyproteins which undergo post-translational proteolytic processing. Genome polyprotein is processed by NIa-pro, P1 and HC-pro proteinases resulting in the production of at least ten individual proteins. P3N-PIPO is cleaved by P1 and HC-pro proteinases resulting in the production of three individual proteins. The P1 proteinase and the HC-pro cleave only their respective C-termini autocatalytically.

It is found in the host cell junction. Its subcellular location is the host plasmodesma. The enzyme catalyses Hydrolyzes a Gly-|-Gly bond at its own C-terminus, commonly in the sequence -Tyr-Xaa-Val-Gly-|-Gly, in the processing of the potyviral polyprotein.. Its function is as follows. Required for aphid transmission and also has proteolytic activity. Only cleaves a Gly-Gly dipeptide at its own C-terminus. Interacts with virions and aphid stylets. Acts as a suppressor of RNA-mediated gene silencing, also known as post-transcriptional gene silencing (PTGS), a mechanism of plant viral defense that limits the accumulation of viral RNAs. May have RNA-binding activity. Functionally, allows efficient cell to cell propagation, by bypassing the host cell wall barrier. Transports viral genome to neighboring plant cells directly through plasmosdesmata, without any budding. This is P3N-PIPO polyprotein from Soybean mosaic virus (strain G2) (SMV).